Reading from the N-terminus, the 202-residue chain is Arenicin-1 (202 aa).

The signal sequence occupies residues 1–25; sequence MTSTQSVAVCATLILAIFCVNDIHC. A propeptide spanning residues 26 to 181 is cleaved from the precursor; it reads DPIAEARAAA…SGDNNEPEKR (156 aa). The 96-residue stretch at 73–168 folds into the BRICHOS domain; it reads GDGVEGSVMV…ACQGKSVYWL (96 aa). 2 disulfide bridges follow: C100-C160 and C184-C201.

Has antimicrobial activity against the Gram-negative bacteria E.coli and P.mirabilis, the Gram-positive bacterium L.monocytogenes and the yeast C.albicans. The protein is Arenicin-1 of Arenicola marina (Lugworm).